A 590-amino-acid polypeptide reads, in one-letter code: Putative laccase-19 (590 aa).

The N-terminal stretch at 1 to 28 (MEKLSMVTSLLCAITVAVLAVAVVSGEA) is a signal peptide. Plastocyanin-like domains follow at residues 36–152 (VVHE…PRDG) and 161–315 (KDVP…YAGA). Residues Asn41 and Asn47 are each glycosylated (N-linked (GlcNAc...) asparagine). Cu cation-binding residues include His86 and His88. Asn120 is a glycosylation site (N-linked (GlcNAc...) asparagine). Cu cation-binding residues include His131 and His133. Asn205, Asn344, Asn378, Asn397, Asn434, and Asn465 each carry an N-linked (GlcNAc...) asparagine glycan. Residues 424-566 (DFPIRPPRPF…ATAFIVEDGP (143 aa)) enclose the Plastocyanin-like 3 domain. Cu cation is bound by residues Asn483, His486, His488, His545, Cys546, His547, His551, and Met556. Positions 565–590 (GPTPETSLPPPPPEFKRCGNNGLSQP) are disordered.

Belongs to the multicopper oxidase family. It depends on Cu cation as a cofactor.

Its subcellular location is the secreted. The protein localises to the extracellular space. It localises to the apoplast. It carries out the reaction 4 hydroquinone + O2 = 4 benzosemiquinone + 2 H2O. Lignin degradation and detoxification of lignin-derived products. The chain is Putative laccase-19 (LAC19) from Oryza sativa subsp. indica (Rice).